The sequence spans 196 residues: Adenylyl-sulfate kinase (196 aa).

Position 31-38 (31-38) interacts with ATP; the sequence is GLSGAGKS. Serine 105 functions as the Phosphoserine intermediate in the catalytic mechanism.

This sequence belongs to the APS kinase family.

The catalysed reaction is adenosine 5'-phosphosulfate + ATP = 3'-phosphoadenylyl sulfate + ADP + H(+). It participates in sulfur metabolism; hydrogen sulfide biosynthesis; sulfite from sulfate: step 2/3. Its function is as follows. Catalyzes the synthesis of activated sulfate. In Aeromonas salmonicida (strain A449), this protein is Adenylyl-sulfate kinase.